The following is a 352-amino-acid chain: MLYSFYKVFCLKDYVFKKARIFVKENKLKANIVFPESSDSRVLKAAIVILQKNLADSIILIGKKDTVINSLKEFSNCNDILGRIEVVDPNSFPDIEMYLDEYWSLQKLKGVTKQSLKTQVLDEITFAMLMVRFGYAKSCVCGAVSTSAKVLSNALRIIPKLEGVKIISSFMIMDTLCTARNVDFCFGHNGILFFADCSVVVNPNSLELAEIALQSAKSFKDILNAKPKVALLSFSTKGSSSAKETEKVKNALNIVRNKESDLLIDGELQLDSAIIKDVAEKKCRESLVAGSANVLIFPNLDAGNIGYKLVERFAFAKAYGPFLQGFSKPISDLSRGCSVDEIVFASALMISI.

Belongs to the phosphate acetyltransferase and butyryltransferase family.

It localises to the cytoplasm. The enzyme catalyses acetyl-CoA + phosphate = acetyl phosphate + CoA. The protein operates within metabolic intermediate biosynthesis; acetyl-CoA biosynthesis; acetyl-CoA from acetate: step 2/2. This Borreliella burgdorferi (strain ATCC 35210 / DSM 4680 / CIP 102532 / B31) (Borrelia burgdorferi) protein is Phosphate acetyltransferase (pta).